A 436-amino-acid polypeptide reads, in one-letter code: Small ribosomal subunit protein uS5m (436 aa).

In terms of domain architecture, S5 DRBM spans 152-218 (FETYCLEVKR…GMASRKLFHV (67 aa)). Residues 417–436 (GVEPMPLGIGLSHVVPKKDD) form a disordered region.

The protein belongs to the universal ribosomal protein uS5 family. In terms of assembly, component of the mitochondrial ribosome small subunit (28S) which comprises a 12S rRNA and about 30 distinct proteins.

Its subcellular location is the mitochondrion. This Caenorhabditis elegans protein is Small ribosomal subunit protein uS5m (mrps-5).